The sequence spans 64 residues: U-myrmeciitoxin(01)-Mg4b (64 aa).

An N-terminal signal peptide occupies residues 1 to 25 (MGKIFFFVLMIAIIGSTFLIEEALG).

It belongs to the ant myrmeciitoxin-01 family. As to quaternary structure, homodimer; disulfide-linked. In terms of processing, contains 2 intrachain disulfide bonds (per chain) and 1 interchain disulfide bond. Expressed by the venom gland.

Its subcellular location is the secreted. May have antimicrobial properties, like most ant linear peptides. This Myrmecia gulosa (Red bulldog ant) protein is U-myrmeciitoxin(01)-Mg4b.